A 739-amino-acid polypeptide reads, in one-letter code: Phosphoribosylformylglycinamidine synthase subunit PurL (739 aa).

H54 is a catalytic residue. ATP is bound by residues Y57 and K96. Residue E98 coordinates Mg(2+). Substrate contacts are provided by residues 99 to 102 (SHNH) and R121. Residue H100 is the Proton acceptor of the active site. D122 lines the Mg(2+) pocket. Position 245 (Q245) interacts with substrate. D273 contacts Mg(2+). 317-319 (ESQ) lines the substrate pocket. D500 and G537 together coordinate ATP. N538 is a Mg(2+) binding site. S540 contributes to the substrate binding site.

It belongs to the FGAMS family. As to quaternary structure, monomer. Part of the FGAM synthase complex composed of 1 PurL, 1 PurQ and 2 PurS subunits.

It localises to the cytoplasm. It catalyses the reaction N(2)-formyl-N(1)-(5-phospho-beta-D-ribosyl)glycinamide + L-glutamine + ATP + H2O = 2-formamido-N(1)-(5-O-phospho-beta-D-ribosyl)acetamidine + L-glutamate + ADP + phosphate + H(+). The protein operates within purine metabolism; IMP biosynthesis via de novo pathway; 5-amino-1-(5-phospho-D-ribosyl)imidazole from N(2)-formyl-N(1)-(5-phospho-D-ribosyl)glycinamide: step 1/2. In terms of biological role, part of the phosphoribosylformylglycinamidine synthase complex involved in the purines biosynthetic pathway. Catalyzes the ATP-dependent conversion of formylglycinamide ribonucleotide (FGAR) and glutamine to yield formylglycinamidine ribonucleotide (FGAM) and glutamate. The FGAM synthase complex is composed of three subunits. PurQ produces an ammonia molecule by converting glutamine to glutamate. PurL transfers the ammonia molecule to FGAR to form FGAM in an ATP-dependent manner. PurS interacts with PurQ and PurL and is thought to assist in the transfer of the ammonia molecule from PurQ to PurL. The polypeptide is Phosphoribosylformylglycinamidine synthase subunit PurL (Bacillus mycoides (strain KBAB4) (Bacillus weihenstephanensis)).